A 54-amino-acid chain; its full sequence is uncharacterized protein (54 aa).

The helical transmembrane segment at 32–52 (LFSLLVLIILCFIDPILFYFI) threads the bilayer.

It is found in the host membrane. This is an uncharacterized protein from Cassava vein mosaic virus (CsVMV).